The chain runs to 170 residues: Adenine phosphoribosyltransferase (170 aa).

It belongs to the purine/pyrimidine phosphoribosyltransferase family. Homodimer.

The protein resides in the cytoplasm. The catalysed reaction is AMP + diphosphate = 5-phospho-alpha-D-ribose 1-diphosphate + adenine. Its pathway is purine metabolism; AMP biosynthesis via salvage pathway; AMP from adenine: step 1/1. Its function is as follows. Catalyzes a salvage reaction resulting in the formation of AMP, that is energically less costly than de novo synthesis. This is Adenine phosphoribosyltransferase from Trichodesmium erythraeum (strain IMS101).